A 126-amino-acid chain; its full sequence is Urease subunit beta (126 aa).

It belongs to the urease beta subunit family. In terms of assembly, heterotrimer of UreA (gamma), UreB (beta) and UreC (alpha) subunits. Three heterotrimers associate to form the active enzyme.

It is found in the cytoplasm. It carries out the reaction urea + 2 H2O + H(+) = hydrogencarbonate + 2 NH4(+). Its pathway is nitrogen metabolism; urea degradation; CO(2) and NH(3) from urea (urease route): step 1/1. The polypeptide is Urease subunit beta (Gloeothece citriformis (strain PCC 7424) (Cyanothece sp. (strain PCC 7424))).